The sequence spans 793 residues: Serine/threonine-protein phosphatase BSU1 (793 aa).

5 Kelch repeats span residues 53–109 (STTA…LYGT), 110–160 (LILI…IAAQ), 214–262 (IFLL…VFGG), 264–314 (KLHV…NQYQ), and 329–388 (HLYV…EASS). Residues S395 and S444 each carry the phosphoserine modification. Residues D510, H512, D544, and N576 each coordinate Mn(2+). H577 serves as the catalytic Proton donor. H629 and H707 together coordinate Mn(2+). Position 764 is a phosphoserine (S764).

This sequence belongs to the PPP phosphatase family. BSU subfamily. As to quaternary structure, interacts with CDG1, CDL1 and ASK7/BIN2. It depends on Mn(2+) as a cofactor. In terms of processing, phosphorylated at Ser-395 and Ser-444. Phosphorylated at Ser-764 by CDG1 and CDL1. In terms of tissue distribution, mainly expressed in young, elongating tissues. In young seedlings, it is expressed at the base of the hypocotyl, at the tip and most peripheral cell layers of cotyledons, and in the vascular cylinder of roots, particularly in the elongation zone and at the point of emergence of lateral roots. In mature plants, it is still present in the root vasculature, but almost completely absent in fully expanded stems and leaves. In flowers, it is mainly expressed in sepal veins, anther filaments, and in the style, suggesting that BSU1 is expressed in actively growing regions and apparently enriched in vascular tissues.

It is found in the nucleus. The catalysed reaction is O-phospho-L-seryl-[protein] + H2O = L-seryl-[protein] + phosphate. The enzyme catalyses O-phospho-L-threonyl-[protein] + H2O = L-threonyl-[protein] + phosphate. Activated by phosphorylation at Ser-764 by CDG1. In terms of biological role, phosphatase that acts as a positive regulator of brassinosteroid (BR) signaling. Dephosphorylates BES1, a transcription factor that regulates the expression of BR-response genes, thereby playing an important role in the regulation of response to BRs. Inactivates the negative regulator of BR signaling ASK7/BIN2 by dephosphorylation at 'Tyr-200'. In Arabidopsis thaliana (Mouse-ear cress), this protein is Serine/threonine-protein phosphatase BSU1 (BSU1).